We begin with the raw amino-acid sequence, 380 residues long: Flap endonuclease 1 (380 aa).

The N-domain stretch occupies residues Met1–Arg104. Position 19 is a symmetric dimethylarginine; by PRMT5 (Arg19). Asp34 is a binding site for Mg(2+). DNA-binding residues include Arg47 and Arg70. Lys80 is modified (N6-acetyllysine). Asp86 is a binding site for Mg(2+). Arg100 and Arg104 each carry symmetric dimethylarginine; by PRMT5. The segment at Glu122–His253 is I-domain. Mg(2+)-binding residues include Glu158, Glu160, Asp179, and Asp181. Residue Glu158 participates in DNA binding. At Ser187 the chain carries Phosphoserine; by CDK2. The residue at position 192 (Arg192) is a Symmetric dimethylarginine; by PRMT5. Ser197 bears the Phosphoserine mark. Gly231 and Asp233 together coordinate DNA. Asp233 is a binding site for Mg(2+). Ser255, Ser293, and Ser335 each carry phosphoserine. Positions Arg327 to Lys380 are disordered. Phosphothreonine is present on Thr336. Residues Thr336–Phe344 are interaction with PCNA. The residue at position 354 (Lys354) is an N6-acetyllysine. A compositionally biased stretch (basic residues) spans Ser363 to Lys380. At Thr364 the chain carries Phosphothreonine. An N6-acetyllysine mark is found at Lys375, Lys377, and Lys380.

The protein belongs to the XPG/RAD2 endonuclease family. FEN1 subfamily. In terms of assembly, interacts with PCNA. Three molecules of FEN1 bind to one PCNA trimer with each molecule binding to one PCNA monomer. PCNA stimulates the nuclease activity without altering cleavage specificity. The C-terminal domain binds EP300; can bind simultaneously to both PCNA and EP300. Interacts with DDX11; this interaction is direct and increases flap endonuclease activity of FEN1. Interacts with WDR4; regulating its endonuclease activity. Interacts with POLB. Mg(2+) is required as a cofactor. Post-translationally, acetylated by EP300. Acetylation inhibits both endonuclease and exonuclease activity. Acetylation also reduces DNA-binding activity but does not affect interaction with PCNA or EP300. Phosphorylation upon DNA damage induces relocalization to the nuclear plasma. Phosphorylation at Ser-187 by CDK2 occurs during late S-phase and results in dissociation from PCNA. In terms of processing, methylation at Arg-192 by PRMT5 impedes Ser-187 phosphorylation and increases interaction with PCNA.

Its subcellular location is the nucleus. It is found in the nucleolus. It localises to the nucleoplasm. The protein localises to the mitochondrion. In terms of biological role, structure-specific nuclease with 5'-flap endonuclease and 5'-3' exonuclease activities involved in DNA replication and repair. During DNA replication, cleaves the 5'-overhanging flap structure that is generated by displacement synthesis when DNA polymerase encounters the 5'-end of a downstream Okazaki fragment. It enters the flap from the 5'-end and then tracks to cleave the flap base, leaving a nick for ligation. Also involved in the long patch base excision repair (LP-BER) pathway, by cleaving within the apurinic/apyrimidinic (AP) site-terminated flap. Acts as a genome stabilization factor that prevents flaps from equilibrating into structures that lead to duplications and deletions. Also possesses 5'-3' exonuclease activity on nicked or gapped double-stranded DNA, and exhibits RNase H activity. Also involved in replication and repair of rDNA and in repairing mitochondrial DNA. The polypeptide is Flap endonuclease 1 (Homo sapiens (Human)).